Consider the following 93-residue polypeptide: Large ribosomal subunit protein bL31B (93 aa).

The protein belongs to the bacterial ribosomal protein bL31 family. Type B subfamily. Part of the 50S ribosomal subunit.

This is Large ribosomal subunit protein bL31B from Psychrobacter arcticus (strain DSM 17307 / VKM B-2377 / 273-4).